The following is a 208-amino-acid chain: Small ribosomal subunit protein uS3 (208 aa).

The KH type-2 domain occupies 16–85 (VDEYLKNKLP…KPQIEVKQIE (70 aa)).

It belongs to the universal ribosomal protein uS3 family. In terms of assembly, part of the 30S ribosomal subunit.

Binds the lower part of the 30S subunit head. The protein is Small ribosomal subunit protein uS3 of Methanococcus aeolicus (strain ATCC BAA-1280 / DSM 17508 / OCM 812 / Nankai-3).